Reading from the N-terminus, the 65-residue chain is U12-theraphotoxin-Cg1a (65 aa).

The signal sequence occupies residues methionine 1–alanine 21. The propeptide occupies isoleucine 22–arginine 29. 3 disulfide bridges follow: cysteine 31–cysteine 45, cysteine 38–cysteine 50, and cysteine 44–cysteine 57.

Belongs to the neurotoxin 10 (Hwtx-1) family. 31 (Jztx-15) subfamily. As to expression, expressed by the venom gland.

The protein localises to the secreted. Its function is as follows. Probable ion channel inhibitor. This Chilobrachys guangxiensis (Chinese earth tiger tarantula) protein is U12-theraphotoxin-Cg1a.